Reading from the N-terminus, the 411-residue chain is Efflux pump periplasmic linker BepF (411 aa).

Residues 118–196 (FVLQKDALQA…SLEQAQINLG (79 aa)) are a coiled coil.

This sequence belongs to the membrane fusion protein (MFP) (TC 8.A.1) family. Probably part of a tripartite efflux pump, which is composed of an outer membrane efflux protein, an inner membrane protein and a protein that expands the periplasmic space. Could form a tripartite pump with BepC and BepG.

It is found in the periplasm. Functionally, may contribute to resistance to some drugs, such as deoxycholate, sodium dodecyl sulfate and nalidixic acid, in the absence of BepD and BepE. The protein is Efflux pump periplasmic linker BepF (bepF) of Brucella suis biovar 1 (strain 1330).